The sequence spans 219 residues: Ribose-5-phosphate isomerase A (219 aa).

Residues 28–31 (SGST), 81–84 (DGAD), and 94–97 (KGGG) contribute to the substrate site. Catalysis depends on glutamate 103, which acts as the Proton acceptor. Residue lysine 121 coordinates substrate.

This sequence belongs to the ribose 5-phosphate isomerase family. As to quaternary structure, homodimer.

It carries out the reaction aldehydo-D-ribose 5-phosphate = D-ribulose 5-phosphate. Its pathway is carbohydrate degradation; pentose phosphate pathway; D-ribose 5-phosphate from D-ribulose 5-phosphate (non-oxidative stage): step 1/1. In terms of biological role, catalyzes the reversible conversion of ribose-5-phosphate to ribulose 5-phosphate. The chain is Ribose-5-phosphate isomerase A from Glaesserella parasuis serovar 5 (strain SH0165) (Haemophilus parasuis).